Reading from the N-terminus, the 232-residue chain is Ribonuclease 3 (232 aa).

One can recognise an RNase III domain in the interval 5-134 (QTVLKNHFAI…FLGALLLDKD (130 aa)). E47 contacts Mg(2+). D51 is an active-site residue. D120 and E123 together coordinate Mg(2+). E123 is an active-site residue. Residues 160–229 (DYKTHLQELL…AKNAVEKGLD (70 aa)) enclose the DRBM domain.

Belongs to the ribonuclease III family. In terms of assembly, homodimer. Mg(2+) is required as a cofactor.

It localises to the cytoplasm. It catalyses the reaction Endonucleolytic cleavage to 5'-phosphomonoester.. In terms of biological role, digests double-stranded RNA. Involved in the processing of primary rRNA transcript to yield the immediate precursors to the large and small rRNAs (23S and 16S). Processes some mRNAs, and tRNAs when they are encoded in the rRNA operon. Processes pre-crRNA and tracrRNA of type II CRISPR loci if present in the organism. This chain is Ribonuclease 3, found in Streptococcus pneumoniae (strain Taiwan19F-14).